A 401-amino-acid polypeptide reads, in one-letter code: Acetate kinase (401 aa).

Asn-10 serves as a coordination point for Mg(2+). Lys-17 is an ATP binding site. Arg-91 is a substrate binding site. The active-site Proton donor/acceptor is the Asp-150. ATP contacts are provided by residues 210 to 214, 285 to 287, and 333 to 337; these read HLGNG, DCR, and GIGEN. Residue Glu-387 participates in Mg(2+) binding.

This sequence belongs to the acetokinase family. Homodimer. It depends on Mg(2+) as a cofactor. Requires Mn(2+) as cofactor.

It is found in the cytoplasm. It catalyses the reaction acetate + ATP = acetyl phosphate + ADP. It functions in the pathway metabolic intermediate biosynthesis; acetyl-CoA biosynthesis; acetyl-CoA from acetate: step 1/2. Functionally, catalyzes the formation of acetyl phosphate from acetate and ATP. Can also catalyze the reverse reaction. This chain is Acetate kinase, found in Pasteurella multocida (strain Pm70).